A 338-amino-acid chain; its full sequence is UPF0194 membrane protein in asrC 5'region (338 aa).

The signal sequence occupies residues 1-23 (MAISPKKRALALVVVLIVAGAVA). A coiled-coil region spans residues 148-207 (KQSLDNAAAALKTARANLDRAQQALTLAIKGPRKEDIAAARQQLQADKAGLSLARRELTD).

The protein belongs to the UPF0194 family.

It is found in the periplasm. The chain is UPF0194 membrane protein in asrC 5'region from Acidithiobacillus ferridurans.